We begin with the raw amino-acid sequence, 275 residues long: Type III pantothenate kinase (275 aa).

6 to 13 (DAGNTNIV) contacts ATP. 108–111 (GADR) contributes to the substrate binding site. The active-site Proton acceptor is the Asp110. Asp130 is a K(+) binding site. Thr133 is an ATP binding site. Substrate is bound at residue Thr187.

It belongs to the type III pantothenate kinase family. In terms of assembly, homodimer. NH4(+) serves as cofactor. The cofactor is K(+).

Its subcellular location is the cytoplasm. The catalysed reaction is (R)-pantothenate + ATP = (R)-4'-phosphopantothenate + ADP + H(+). The protein operates within cofactor biosynthesis; coenzyme A biosynthesis; CoA from (R)-pantothenate: step 1/5. In terms of biological role, catalyzes the phosphorylation of pantothenate (Pan), the first step in CoA biosynthesis. This Zymomonas mobilis subsp. mobilis (strain ATCC 31821 / ZM4 / CP4) protein is Type III pantothenate kinase.